Reading from the N-terminus, the 35-residue chain is Manganese peroxidase (35 aa).

Residues 1-11 (LSLLGHDERVT) are compositionally biased toward basic and acidic residues. The interval 1–35 (LSLLGHDERVTPEPFDSVTAQNARGNQADVQSLPR) is disordered. Positions 18–35 (VTAQNARGNQADVQSLPR) are enriched in polar residues.

Belongs to the peroxidase family. Requires heme b as cofactor. Ca(2+) serves as cofactor.

The enzyme catalyses 2 Mn(2+) + H2O2 + 2 H(+) = 2 Mn(3+) + 2 H2O. Its function is as follows. Has manganese peroxidase activity. In Irpex lacteus (Milk-white toothed polypore), this protein is Manganese peroxidase.